Here is a 403-residue protein sequence, read N- to C-terminus: Argininosuccinate synthase (403 aa).

ATP is bound at residue 10–18 (AYSGGLDTS). Residue Y87 participates in L-citrulline binding. An ATP-binding site is contributed by G117. The L-aspartate site is built by T119, N123, and D124. N123 lines the L-citrulline pocket. The L-citrulline site is built by R127, S175, S184, E260, and Y272.

It belongs to the argininosuccinate synthase family. Type 1 subfamily. Homotetramer.

The protein localises to the cytoplasm. It catalyses the reaction L-citrulline + L-aspartate + ATP = 2-(N(omega)-L-arginino)succinate + AMP + diphosphate + H(+). Its pathway is amino-acid biosynthesis; L-arginine biosynthesis; L-arginine from L-ornithine and carbamoyl phosphate: step 2/3. In Bacillus licheniformis (strain ATCC 14580 / DSM 13 / JCM 2505 / CCUG 7422 / NBRC 12200 / NCIMB 9375 / NCTC 10341 / NRRL NRS-1264 / Gibson 46), this protein is Argininosuccinate synthase.